Here is a 265-residue protein sequence, read N- to C-terminus: Neuronal membrane glycoprotein M6-b (265 aa).

The helical transmembrane segment at 31-51 (GGVPYASLVATILCFSGVALF) threads the bilayer. N-linked (GlcNAc...) asparagine glycosylation is present at Asn73. Transmembrane regions (helical) follow at residues 90–110 (VIYGIASFFFLYGIILLAEGF) and 136–156 (FVFLTYVLGVAWLGVFGFSAV). Asn177 carries N-linked (GlcNAc...) asparagine glycosylation. The helical transmembrane segment at 224 to 244 (LFIVACAGAGATVIALLIYMM) threads the bilayer. Ser257 carries the phosphoserine modification.

Belongs to the myelin proteolipid protein family. As to quaternary structure, interacts with SERT. As to expression, neurons and glia; cerebellar Bergmann glia, in glia within white matter tracts of the cerebellum and cerebrum, and in embryonic dorsal root ganglia.

It localises to the cell membrane. In terms of biological role, may be involved in neural development. Involved in regulation of osteoblast function and bone formation. Involved in matrix vesicle release by osteoblasts; this function seems to involve maintenance of the actin cytoskeleton. May be involved in cellular trafficking of SERT and thereby in regulation of serotonin uptake. The chain is Neuronal membrane glycoprotein M6-b (GPM6B) from Homo sapiens (Human).